A 396-amino-acid chain; its full sequence is S-adenosylmethionine synthase 4 (396 aa).

E12 contacts Mg(2+). ATP is bound at residue H18. A K(+)-binding site is contributed by E46. The L-methionine site is built by E59 and Q102. Residues 170 to 172 (DGK), 238 to 241 (SGRF), D249, 255 to 256 (RK), A272, K276, and K280 each bind ATP. D249 provides a ligand contact to L-methionine. K280 contacts L-methionine.

It belongs to the AdoMet synthase family. As to quaternary structure, homotetramer. Requires Mn(2+) as cofactor. It depends on Mg(2+) as a cofactor. Co(2+) is required as a cofactor. The cofactor is K(+).

Its subcellular location is the cytoplasm. The catalysed reaction is L-methionine + ATP + H2O = S-adenosyl-L-methionine + phosphate + diphosphate. It participates in amino-acid biosynthesis; S-adenosyl-L-methionine biosynthesis; S-adenosyl-L-methionine from L-methionine: step 1/1. Catalyzes the formation of S-adenosylmethionine from methionine and ATP. The reaction comprises two steps that are both catalyzed by the same enzyme: formation of S-adenosylmethionine (AdoMet) and triphosphate, and subsequent hydrolysis of the triphosphate. This Hordeum vulgare (Barley) protein is S-adenosylmethionine synthase 4 (SAM4).